A 265-amino-acid chain; its full sequence is Tryptophan synthase alpha chain (265 aa).

Residues glutamate 48 and aspartate 59 each act as proton acceptor in the active site.

It belongs to the TrpA family. Tetramer of two alpha and two beta chains.

The catalysed reaction is (1S,2R)-1-C-(indol-3-yl)glycerol 3-phosphate + L-serine = D-glyceraldehyde 3-phosphate + L-tryptophan + H2O. It functions in the pathway amino-acid biosynthesis; L-tryptophan biosynthesis; L-tryptophan from chorismate: step 5/5. Its function is as follows. The alpha subunit is responsible for the aldol cleavage of indoleglycerol phosphate to indole and glyceraldehyde 3-phosphate. The polypeptide is Tryptophan synthase alpha chain (Vesicomyosocius okutanii subsp. Calyptogena okutanii (strain HA)).